A 450-amino-acid polypeptide reads, in one-letter code: UDP-N-acetylmuramoylalanine--D-glutamate ligase (450 aa).

119-125 (GSNGKTT) lines the ATP pocket.

The protein belongs to the MurCDEF family.

The protein localises to the cytoplasm. The catalysed reaction is UDP-N-acetyl-alpha-D-muramoyl-L-alanine + D-glutamate + ATP = UDP-N-acetyl-alpha-D-muramoyl-L-alanyl-D-glutamate + ADP + phosphate + H(+). The protein operates within cell wall biogenesis; peptidoglycan biosynthesis. Functionally, cell wall formation. Catalyzes the addition of glutamate to the nucleotide precursor UDP-N-acetylmuramoyl-L-alanine (UMA). This Streptococcus pneumoniae (strain CGSP14) protein is UDP-N-acetylmuramoylalanine--D-glutamate ligase.